Here is a 257-residue protein sequence, read N- to C-terminus: Hydroxyethylthiazole kinase (257 aa).

M42 provides a ligand contact to substrate. Residues R117 and T163 each coordinate ATP. A190 provides a ligand contact to substrate.

This sequence belongs to the Thz kinase family. Mg(2+) is required as a cofactor.

It carries out the reaction 5-(2-hydroxyethyl)-4-methylthiazole + ATP = 4-methyl-5-(2-phosphooxyethyl)-thiazole + ADP + H(+). It functions in the pathway cofactor biosynthesis; thiamine diphosphate biosynthesis; 4-methyl-5-(2-phosphoethyl)-thiazole from 5-(2-hydroxyethyl)-4-methylthiazole: step 1/1. Functionally, catalyzes the phosphorylation of the hydroxyl group of 4-methyl-5-beta-hydroxyethylthiazole (THZ). This is Hydroxyethylthiazole kinase from Roseobacter denitrificans (strain ATCC 33942 / OCh 114) (Erythrobacter sp. (strain OCh 114)).